We begin with the raw amino-acid sequence, 335 residues long: Glyceraldehyde-3-phosphate dehydrogenase 2 (335 aa).

NAD(+)-binding positions include 13-14 (TI) and Gly-111. Position 140–142 (140–142 (SCN)) interacts with D-glyceraldehyde 3-phosphate. Residue Cys-141 is the Nucleophile of the active site. Arg-169 is a binding site for NAD(+). Residues Thr-171 and 195-196 (HG) each bind D-glyceraldehyde 3-phosphate. NAD(+) is bound at residue Gln-300.

It belongs to the glyceraldehyde-3-phosphate dehydrogenase family. Homotetramer.

It is found in the cytoplasm. It catalyses the reaction D-glyceraldehyde 3-phosphate + phosphate + NADP(+) = (2R)-3-phospho-glyceroyl phosphate + NADPH + H(+). The enzyme catalyses D-glyceraldehyde 3-phosphate + phosphate + NAD(+) = (2R)-3-phospho-glyceroyl phosphate + NADH + H(+). The protein operates within carbohydrate degradation; glycolysis; pyruvate from D-glyceraldehyde 3-phosphate: step 1/5. This Methanosarcina acetivorans (strain ATCC 35395 / DSM 2834 / JCM 12185 / C2A) protein is Glyceraldehyde-3-phosphate dehydrogenase 2 (gapB).